The primary structure comprises 72 residues: MKKKIHPRYSKITATCSCGNIIEIFSTINHNINLDICAKCHPFYTGKQRVIDTGGRVERFKKRFKFTKQELN.

Positions 16, 18, 37, and 40 each coordinate Zn(2+).

The protein belongs to the bacterial ribosomal protein bL31 family. Type A subfamily. In terms of assembly, part of the 50S ribosomal subunit. Zn(2+) is required as a cofactor.

In terms of biological role, binds the 23S rRNA. This is Large ribosomal subunit protein bL31 from Buchnera aphidicola subsp. Acyrthosiphon pisum (strain Tuc7).